The chain runs to 384 residues: Dual specificity protein phosphatase 9 (384 aa).

Serine 16 is modified (phosphoserine). One can recognise a Rhodanese domain in the interval proline 18–glutamate 139. Residues phenylalanine 203–leucine 346 enclose the Tyrosine-protein phosphatase domain. Position 262 is a phosphoserine (serine 262). The Phosphocysteine intermediate role is filled by cysteine 290. The interval glutamate 348–threonine 384 is disordered. Serine 351 bears the Phosphoserine mark. Polar residues predominate over residues glutamine 359 to serine 375.

It belongs to the protein-tyrosine phosphatase family. Non-receptor class dual specificity subfamily.

The protein localises to the cytoplasm. The enzyme catalyses O-phospho-L-tyrosyl-[protein] + H2O = L-tyrosyl-[protein] + phosphate. It carries out the reaction O-phospho-L-seryl-[protein] + H2O = L-seryl-[protein] + phosphate. It catalyses the reaction O-phospho-L-threonyl-[protein] + H2O = L-threonyl-[protein] + phosphate. In terms of biological role, inactivates MAP kinases. Has a specificity for the ERK family. The sequence is that of Dual specificity protein phosphatase 9 (DUSP9) from Homo sapiens (Human).